The sequence spans 463 residues: Metacaspase-1 (463 aa).

Positions 1–149 (MSWNQYPGGG…PQLQGQGGQS (149 aa)) are disordered. Residues 7–18 (PGGGHHQQGGYG) are compositionally biased toward gly residues. Pro residues predominate over residues 20–56 (RPPPPQWAQQGPPPPPNMGYRPPPPPQAYYNNPPPPQ). Residues 57 to 83 (QYQRPAPQQNGYQQGGYQQQQQSQGNY) show a composition bias toward low complexity. Catalysis depends on residues His-247 and Cys-309.

It belongs to the peptidase C14B family.

Its function is as follows. Involved in cell death (apoptosis). The polypeptide is Metacaspase-1 (MCA1) (Cryptococcus neoformans var. neoformans serotype D (strain B-3501A) (Filobasidiella neoformans)).